A 104-amino-acid polypeptide reads, in one-letter code: Larval cuticle protein 65Ab1 (104 aa).

Positions 1-18 are cleaved as a signal peptide; it reads MKFLIVFVALFAMAVARP. Residues 32-102 enclose the Chitin-binding type R&amp;R domain; that stretch reads PEKWSSDVET…PQGAHLPVAP (71 aa).

Its function is as follows. Component of the cuticle of the larva. This Drosophila melanogaster (Fruit fly) protein is Larval cuticle protein 65Ab1.